A 311-amino-acid chain; its full sequence is R2-like ligand binding oxidase (311 aa).

Mn(2+)-binding residues include Glu68, Glu101, and His104. The segment at residues 71-162 (VTQDIQPFMA…AAQVRASVTY (92 aa)) is a cross-link (3-(O4'-tyrosyl)-valine (Val-Tyr)). Residue Glu101 participates in Fe cation binding. Positions 167, 202, and 205 each coordinate Fe cation.

This sequence belongs to the ribonucleoside diphosphate reductase small chain family. R2-like ligand binding oxidase subfamily. In terms of assembly, homodimer. Fe cation is required as a cofactor. Requires Mn(2+) as cofactor.

Functionally, probable oxidase that might be involved in lipid metabolism. The sequence is that of R2-like ligand binding oxidase from Mycobacterium avium (strain 104).